The primary structure comprises 95 residues: Co-chaperonin GroES (95 aa).

This sequence belongs to the GroES chaperonin family. Heptamer of 7 subunits arranged in a ring. Interacts with the chaperonin GroEL.

It is found in the cytoplasm. Together with the chaperonin GroEL, plays an essential role in assisting protein folding. The GroEL-GroES system forms a nano-cage that allows encapsulation of the non-native substrate proteins and provides a physical environment optimized to promote and accelerate protein folding. GroES binds to the apical surface of the GroEL ring, thereby capping the opening of the GroEL channel. In Novosphingobium aromaticivorans (strain ATCC 700278 / DSM 12444 / CCUG 56034 / CIP 105152 / NBRC 16084 / F199), this protein is Co-chaperonin GroES.